The chain runs to 366 residues: MKFIINNNILIKNLQKISRLLVKNTSLPILDNVLINIKNGMLSLTGTNLEIELVAMIQLSTEHISGTATISGRKLLDICRNSLNSSNIEMQLNNNKMHIISGNSRYILTTLPYDSFPVHHDFHHISEFFIPSDILKKMIEKIQFSMAKQDVRYYLNGILLEKTDRSLYAVATDGYRLGISKFFLKENIIPFSIVIPRKGVIELYRLLNIPKQPIKVLVGKNNIRVHIEDLIFTTQLIEGQYPDYKSVLLENKNNFITLNSKLLKQSLLRAAILSHEKFCGVEIHIRNGQFKVLSDNQEEEIAEDRFNINYTGNTVKISINVYYIIEILNSITSENIFLFLNNANNSIQIEAENDASILYVVMLLKR.

Belongs to the beta sliding clamp family. Forms a ring-shaped head-to-tail homodimer around DNA which binds and tethers DNA polymerases and other proteins to the DNA. The DNA replisome complex has a single clamp-loading complex (3 tau and 1 each of delta, delta', psi and chi subunits) which binds 3 Pol III cores (1 core on the leading strand and 2 on the lagging strand) each with a beta sliding clamp dimer. Additional proteins in the replisome are other copies of gamma, psi and chi, Ssb, DNA helicase and RNA primase.

The protein resides in the cytoplasm. Confers DNA tethering and processivity to DNA polymerases and other proteins. Acts as a clamp, forming a ring around DNA (a reaction catalyzed by the clamp-loading complex) which diffuses in an ATP-independent manner freely and bidirectionally along dsDNA. Initially characterized for its ability to contact the catalytic subunit of DNA polymerase III (Pol III), a complex, multichain enzyme responsible for most of the replicative synthesis in bacteria; Pol III exhibits 3'-5' exonuclease proofreading activity. The beta chain is required for initiation of replication as well as for processivity of DNA replication. The protein is Beta sliding clamp (dnaN) of Buchnera aphidicola subsp. Acyrthosiphon pisum (strain APS) (Acyrthosiphon pisum symbiotic bacterium).